Reading from the N-terminus, the 173-residue chain is Small ribosomal subunit protein uS11m (173 aa).

Belongs to the universal ribosomal protein uS11 family.

The protein localises to the mitochondrion. This is Small ribosomal subunit protein uS11m (RPS11) from Acanthamoeba castellanii (Amoeba).